We begin with the raw amino-acid sequence, 357 residues long: S-adenosylmethionine:tRNA ribosyltransferase-isomerase (357 aa).

The protein belongs to the QueA family. Monomer.

It is found in the cytoplasm. It catalyses the reaction 7-aminomethyl-7-carbaguanosine(34) in tRNA + S-adenosyl-L-methionine = epoxyqueuosine(34) in tRNA + adenine + L-methionine + 2 H(+). It functions in the pathway tRNA modification; tRNA-queuosine biosynthesis. In terms of biological role, transfers and isomerizes the ribose moiety from AdoMet to the 7-aminomethyl group of 7-deazaguanine (preQ1-tRNA) to give epoxyqueuosine (oQ-tRNA). This Buchnera aphidicola subsp. Acyrthosiphon pisum (strain APS) (Acyrthosiphon pisum symbiotic bacterium) protein is S-adenosylmethionine:tRNA ribosyltransferase-isomerase.